Here is a 126-residue protein sequence, read N- to C-terminus: Histone H2B type 1-N (126 aa).

Positions 1–12 are enriched in low complexity; sequence MPEPSKSAPAPK. The interval 1 to 36 is disordered; it reads MPEPSKSAPAPKKGSKKAVTKAQKKDGKKRKRSRKE. The residue at position 2 (Pro-2) is an N-acetylproline. The residue at position 3 (Glu-3) is an ADP-ribosyl glutamic acid. The residue at position 6 (Lys-6) is an N6-(2-hydroxyisobutyryl)lysine; alternate. An N6-(beta-hydroxybutyryl)lysine; alternate modification is found at Lys-6. Lys-6 bears the N6-acetyllysine; alternate mark. Position 6 is an N6-butyryllysine; alternate (Lys-6). Lys-6 is modified (N6-crotonyllysine; alternate). Lys-6 bears the N6-lactoyllysine; alternate mark. Lys-6 is covalently cross-linked (Glycyl lysine isopeptide (Lys-Gly) (interchain with G-Cter in SUMO2); alternate). Ser-7 is modified (ADP-ribosylserine). N6-(beta-hydroxybutyryl)lysine; alternate is present on Lys-12. Residues Lys-12 and Lys-13 each carry the N6-acetyllysine; alternate modification. Lys-12 and Lys-13 each carry N6-crotonyllysine; alternate. An N6-lactoyllysine; alternate modification is found at Lys-12. Residue Lys-13 is modified to N6-(2-hydroxyisobutyryl)lysine; alternate. Residue Ser-15 is modified to Phosphoserine; by STK4/MST1. N6-acetyllysine; alternate is present on residues Lys-16, Lys-17, Lys-21, and Lys-24. N6-crotonyllysine; alternate occurs at positions 16, 17, 21, and 24. Lys-16, Lys-17, Lys-21, and Lys-24 each carry N6-lactoyllysine; alternate. Lys-17 is modified (N6-glutaryllysine; alternate). N6-(2-hydroxyisobutyryl)lysine; alternate is present on residues Lys-21 and Lys-24. At Lys-21 the chain carries N6-(beta-hydroxybutyryl)lysine; alternate. An N6-butyryllysine; alternate modification is found at Lys-21. Lys-21 participates in a covalent cross-link: Glycyl lysine isopeptide (Lys-Gly) (interchain with G-Cter in SUMO2); alternate. N6-(2-hydroxyisobutyryl)lysine is present on Lys-25. The residue at position 35 (Lys-35) is an N6-(2-hydroxyisobutyryl)lysine; alternate. At Lys-35 the chain carries N6-(beta-hydroxybutyryl)lysine; alternate. Position 35 is an N6-crotonyllysine; alternate (Lys-35). Position 35 is an N6-glutaryllysine; alternate (Lys-35). Residue Lys-35 is modified to N6-succinyllysine; alternate. Residue Lys-35 forms a Glycyl lysine isopeptide (Lys-Gly) (interchain with G-Cter in ubiquitin); alternate linkage. At Glu-36 the chain carries PolyADP-ribosyl glutamic acid. Residue Ser-37 is modified to Phosphoserine; by AMPK. Residues Lys-44, Lys-47, and Lys-58 each carry the N6-(2-hydroxyisobutyryl)lysine; alternate modification. Position 44 is an N6-lactoyllysine; alternate (Lys-44). 2 positions are modified to N6-glutaryllysine; alternate: Lys-44 and Lys-47. Lys-47 bears the N6-methyllysine; alternate mark. Lys-58 carries the N6,N6-dimethyllysine; alternate modification. Dimethylated arginine is present on Arg-80. Lys-86 is modified (N6-(2-hydroxyisobutyryl)lysine; alternate). Lys-86 carries the N6-acetyllysine; alternate modification. N6-lactoyllysine; alternate is present on Lys-86. Residue Lys-86 is modified to N6,N6,N6-trimethyllysine; alternate. Omega-N-methylarginine occurs at positions 87 and 93. Lys-109 is subject to N6-(2-hydroxyisobutyryl)lysine; alternate. An N6-lactoyllysine; alternate modification is found at Lys-109. An N6-glutaryllysine; alternate modification is found at Lys-109. An N6-methyllysine; alternate modification is found at Lys-109. Ser-113 carries O-linked (GlcNAc) serine glycosylation. Residue Thr-116 is modified to Phosphothreonine. N6-(2-hydroxyisobutyryl)lysine; alternate occurs at positions 117 and 121. N6-(beta-hydroxybutyryl)lysine; alternate is present on Lys-117. An N6-lactoyllysine; alternate mark is found at Lys-117 and Lys-121. An N6-glutaryllysine; alternate mark is found at Lys-117 and Lys-121. Residues Lys-117 and Lys-121 each carry the N6-succinyllysine; alternate modification. Lys-117 bears the N6-methylated lysine; alternate mark. A Glycyl lysine isopeptide (Lys-Gly) (interchain with G-Cter in ubiquitin); alternate cross-link involves residue Lys-121.

It belongs to the histone H2B family. As to quaternary structure, the nucleosome is a histone octamer containing two molecules each of H2A, H2B, H3 and H4 assembled in one H3-H4 heterotetramer and two H2A-H2B heterodimers. The octamer wraps approximately 147 bp of DNA. Monoubiquitination at Lys-35 (H2BK34Ub) by the MSL1/MSL2 dimer is required for histone H3 'Lys-4' (H3K4me) and 'Lys-79' (H3K79me) methylation and transcription activation at specific gene loci, such as HOXA9 and MEIS1 loci. Similarly, monoubiquitination at Lys-121 (H2BK120Ub) by the RNF20/40 complex gives a specific tag for epigenetic transcriptional activation and is also prerequisite for histone H3 'Lys-4' and 'Lys-79' methylation. It also functions cooperatively with the FACT dimer to stimulate elongation by RNA polymerase II. H2BK120Ub also acts as a regulator of mRNA splicing: deubiquitination by USP49 is required for efficient cotranscriptional splicing of a large set of exons. Post-translationally, phosphorylated on Ser-15 (H2BS14ph) by STK4/MST1 during apoptosis; which facilitates apoptotic chromatin condensation. Also phosphorylated on Ser-15 in response to DNA double strand breaks (DSBs), and in correlation with somatic hypermutation and immunoglobulin class-switch recombination. Phosphorylation at Ser-37 (H2BS36ph) by AMPK in response to stress promotes transcription. In terms of processing, glcNAcylation at Ser-113 promotes monoubiquitination of Lys-121. It fluctuates in response to extracellular glucose, and associates with transcribed genes. ADP-ribosylated by PARP1 or PARP2 on Ser-7 (H2BS6ADPr) in response to DNA damage. H2BS6ADPr promotes recruitment of CHD1L. Mono-ADP-ribosylated on Glu-3 (H2BE2ADPr) by PARP3 in response to single-strand breaks. Poly ADP-ribosylation on Glu-36 (H2BE35ADPr) by PARP1 regulates adipogenesis: it inhibits phosphorylation at Ser-37 (H2BS36ph), thereby blocking expression of pro-adipogenetic genes. Post-translationally, crotonylation (Kcr) is specifically present in male germ cells and marks testis-specific genes in post-meiotic cells, including X-linked genes that escape sex chromosome inactivation in haploid cells. Crotonylation marks active promoters and enhancers and confers resistance to transcriptional repressors. It is also associated with post-meiotically activated genes on autosomes. In terms of processing, lactylated in macrophages by EP300/P300 by using lactoyl-CoA directly derived from endogenous or exogenous lactate, leading to stimulates gene transcription.

The protein localises to the nucleus. Its subcellular location is the chromosome. Core component of nucleosome. Nucleosomes wrap and compact DNA into chromatin, limiting DNA accessibility to the cellular machineries which require DNA as a template. Histones thereby play a central role in transcription regulation, DNA repair, DNA replication and chromosomal stability. DNA accessibility is regulated via a complex set of post-translational modifications of histones, also called histone code, and nucleosome remodeling. The sequence is that of Histone H2B type 1-N (H2BC15) from Bos taurus (Bovine).